Reading from the N-terminus, the 119-residue chain is Large ribosomal subunit protein bL20 (119 aa).

Belongs to the bacterial ribosomal protein bL20 family.

In terms of biological role, binds directly to 23S ribosomal RNA and is necessary for the in vitro assembly process of the 50S ribosomal subunit. It is not involved in the protein synthesizing functions of that subunit. This chain is Large ribosomal subunit protein bL20, found in Shouchella clausii (strain KSM-K16) (Alkalihalobacillus clausii).